We begin with the raw amino-acid sequence, 358 residues long: Chorismate synthase (358 aa).

Arg47 serves as a coordination point for NADP(+). FMN is bound by residues 124 to 126 (RSS), 240 to 241 (NA), Gly284, 299 to 303 (KPVAT), and Arg325.

Belongs to the chorismate synthase family. As to quaternary structure, homotetramer. FMNH2 serves as cofactor.

It catalyses the reaction 5-O-(1-carboxyvinyl)-3-phosphoshikimate = chorismate + phosphate. Its pathway is metabolic intermediate biosynthesis; chorismate biosynthesis; chorismate from D-erythrose 4-phosphate and phosphoenolpyruvate: step 7/7. In terms of biological role, catalyzes the anti-1,4-elimination of the C-3 phosphate and the C-6 proR hydrogen from 5-enolpyruvylshikimate-3-phosphate (EPSP) to yield chorismate, which is the branch point compound that serves as the starting substrate for the three terminal pathways of aromatic amino acid biosynthesis. This reaction introduces a second double bond into the aromatic ring system. This Bacteroides fragilis (strain YCH46) protein is Chorismate synthase.